We begin with the raw amino-acid sequence, 165 residues long: Inorganic pyrophosphatase (165 aa).

Lysine 21, arginine 35, and tyrosine 47 together coordinate substrate. Mg(2+)-binding residues include aspartate 57, aspartate 62, and aspartate 94. A substrate-binding site is contributed by tyrosine 131.

The protein belongs to the PPase family. As to quaternary structure, homohexamer. The cofactor is Mg(2+).

It is found in the cytoplasm. The catalysed reaction is diphosphate + H2O = 2 phosphate + H(+). Its function is as follows. Catalyzes the hydrolysis of inorganic pyrophosphate (PPi) forming two phosphate ions. The polypeptide is Inorganic pyrophosphatase (Geobacillus stearothermophilus (Bacillus stearothermophilus)).